The following is a 189-amino-acid chain: RPW8-like protein 1 (189 aa).

The 153-residue stretch at 1–153 folds into the RPW8 domain; it reads MPLVELLTSA…ITRQPMDIIE (153 aa). The chain crosses the membrane as a helical span at residues 7 to 24; sequence LTSAALGLSLQLLHDAII. Coiled coils occupy residues 65–92 and 126–147; these read FRKV…LKLR and DIKK…ITRQ. A glycan (N-linked (GlcNAc...) asparagine) is linked at N177.

Belongs to the plant RPW8 protein family.

The protein localises to the membrane. Its function is as follows. Probable disease resistance (R) protein. The chain is RPW8-like protein 1 from Arabidopsis thaliana (Mouse-ear cress).